Consider the following 221-residue polypeptide: Ribosomal RNA small subunit methyltransferase Nep1 (221 aa).

Residues Gly-174, Gly-179, and 196-201 (IGDETM) each bind S-adenosyl-L-methionine.

This sequence belongs to the class IV-like SAM-binding methyltransferase superfamily. RNA methyltransferase NEP1 family. Homodimer.

The catalysed reaction is a pseudouridine in rRNA + S-adenosyl-L-methionine = an N(1)-methylpseudouridine in rRNA + S-adenosyl-L-homocysteine + H(+). In terms of biological role, methyltransferase involved in ribosomal biogenesis. Specifically catalyzes the N1-methylation of the pseudouridine corresponding to position 914 in M.jannaschii 16S rRNA. The polypeptide is Ribosomal RNA small subunit methyltransferase Nep1 (Pyrobaculum islandicum (strain DSM 4184 / JCM 9189 / GEO3)).